Consider the following 580-residue polypeptide: Pentatricopeptide repeat-containing protein At5g10690 (580 aa).

PPR repeat units follow at residues 76–110, 112–142, 151–181, 189–223, 224–254, 266–296, 302–337, 342–376, and 382–417; these read NTIV…GGIG, DSIS…IEYG, SSSL…YDIL, SVLI…RLEP, DRLT…MKEK, DVVT…MKLC, DRTA…GANE, KPHL…SSGS, and QQEA…KTIP. The region spanning 486–553 is the CBS domain; it reads VPIVDDRGSC…IVVHCGNFSG (68 aa).

The protein belongs to the PPR family. P subfamily.

This Arabidopsis thaliana (Mouse-ear cress) protein is Pentatricopeptide repeat-containing protein At5g10690 (CBSPPR1).